A 120-amino-acid chain; its full sequence is UPF0231 protein KPK_4613 (120 aa).

Belongs to the UPF0231 family.

This chain is UPF0231 protein KPK_4613, found in Klebsiella pneumoniae (strain 342).